The sequence spans 561 residues: Dihydroxy-acid dehydratase (561 aa).

[2Fe-2S] cluster is bound at residue Cys-50. Asp-82 lines the Mg(2+) pocket. Cys-123 contacts [2Fe-2S] cluster. Mg(2+) is bound by residues Asp-124 and Lys-125. Residue Lys-125 is modified to N6-carboxylysine. Residue Cys-195 participates in [2Fe-2S] cluster binding. Glu-447 contacts Mg(2+). Ser-473 functions as the Proton acceptor in the catalytic mechanism.

The protein belongs to the IlvD/Edd family. In terms of assembly, homodimer. It depends on [2Fe-2S] cluster as a cofactor. The cofactor is Mg(2+).

It carries out the reaction (2R)-2,3-dihydroxy-3-methylbutanoate = 3-methyl-2-oxobutanoate + H2O. It catalyses the reaction (2R,3R)-2,3-dihydroxy-3-methylpentanoate = (S)-3-methyl-2-oxopentanoate + H2O. It participates in amino-acid biosynthesis; L-isoleucine biosynthesis; L-isoleucine from 2-oxobutanoate: step 3/4. It functions in the pathway amino-acid biosynthesis; L-valine biosynthesis; L-valine from pyruvate: step 3/4. Functionally, functions in the biosynthesis of branched-chain amino acids. Catalyzes the dehydration of (2R,3R)-2,3-dihydroxy-3-methylpentanoate (2,3-dihydroxy-3-methylvalerate) into 2-oxo-3-methylpentanoate (2-oxo-3-methylvalerate) and of (2R)-2,3-dihydroxy-3-methylbutanoate (2,3-dihydroxyisovalerate) into 2-oxo-3-methylbutanoate (2-oxoisovalerate), the penultimate precursor to L-isoleucine and L-valine, respectively. This chain is Dihydroxy-acid dehydratase, found in Acaryochloris marina (strain MBIC 11017).